Here is a 74-residue protein sequence, read N- to C-terminus: Putative defensin-like protein 36 (74 aa).

A signal peptide spans 1-22 (MASNKVSFFLVLCLCILLAGEC). Disulfide bonds link C33/C59, C45/C69, and C49/C71.

Belongs to the DEFL family.

It localises to the secreted. The sequence is that of Putative defensin-like protein 36 from Arabidopsis thaliana (Mouse-ear cress).